The following is a 148-amino-acid chain: Large ribosomal subunit protein uL15 (148 aa).

Residues 1–28 (MIRRRKKVRKLRGSHTHGWGCKKKHRGG) are compositionally biased toward basic residues. Residues 1–43 (MIRRRKKVRKLRGSHTHGWGCKKKHRGGGSKGGRGMAGTGKRK) form a disordered region. The span at 29–38 (GSKGGRGMAG) shows a compositional bias: gly residues.

It belongs to the universal ribosomal protein uL15 family. As to quaternary structure, part of the 50S ribosomal subunit.

In terms of biological role, binds to the 23S rRNA. The chain is Large ribosomal subunit protein uL15 from Thermococcus kodakarensis (strain ATCC BAA-918 / JCM 12380 / KOD1) (Pyrococcus kodakaraensis (strain KOD1)).